Reading from the N-terminus, the 434-residue chain is Enolase (434 aa).

Residue Gln-163 coordinates (2R)-2-phosphoglycerate. The active-site Proton donor is Glu-205. Mg(2+) contacts are provided by Asp-243, Glu-291, and Asp-318. Residues Lys-343, Arg-372, Ser-373, and Lys-394 each coordinate (2R)-2-phosphoglycerate. Lys-343 serves as the catalytic Proton acceptor.

Belongs to the enolase family. It depends on Mg(2+) as a cofactor.

The protein resides in the cytoplasm. Its subcellular location is the secreted. It localises to the cell surface. It carries out the reaction (2R)-2-phosphoglycerate = phosphoenolpyruvate + H2O. It participates in carbohydrate degradation; glycolysis; pyruvate from D-glyceraldehyde 3-phosphate: step 4/5. Functionally, catalyzes the reversible conversion of 2-phosphoglycerate (2-PG) into phosphoenolpyruvate (PEP). It is essential for the degradation of carbohydrates via glycolysis. The protein is Enolase of Fusobacterium nucleatum subsp. nucleatum (strain ATCC 25586 / DSM 15643 / BCRC 10681 / CIP 101130 / JCM 8532 / KCTC 2640 / LMG 13131 / VPI 4355).